A 242-amino-acid polypeptide reads, in one-letter code: Zinc-finger homeodomain protein 13 (242 aa).

The segment at 64 to 111 (YYECRKNHAADIGTTAYDGCGEFVSSTGEEDSLNCAACGCHRNFHREE) adopts a ZF-HD dimerization-type; degenerate zinc-finger fold. Residues 144-166 (GGKSEGKKKKKEKESYGGDPIIK) are disordered. The span at 155-166 (EKESYGGDPIIK) shows a compositional bias: basic and acidic residues. Residues 179–238 (VKRLKTKFTAEQTEKMRDYAEKLRWKVRPERQEEVEEFCVEIGVNRKNFRIWMNNHKDKI) constitute a DNA-binding region (homeobox).

Homo- and heterodimer with other ZFHD proteins. Interacts with MIF1, MIF2 and MIF3; these interactions prevent nuclear localization and DNA-binding to inhibit transcription regulation activity. Binds to ZHD11. As to expression, mostly expressed in flowers.

It localises to the nucleus. Putative transcription factor. In Arabidopsis thaliana (Mouse-ear cress), this protein is Zinc-finger homeodomain protein 13 (ZHD13).